Here is a 420-residue protein sequence, read N- to C-terminus: Deoxyribodipyrimidine photo-lyase (420 aa).

Residues 2-124 form the Photolyase/cryptochrome alpha/beta domain; sequence GPLLVWHRGD…PLHLLPAPHL (123 aa). Positions 152 to 175 are disordered; the sequence is APEALPKGPEEGEIPREDPGLPLP. A compositionally biased stretch (basic and acidic residues) spans 159-170; sequence GPEEGEIPREDP. Tyr197 serves as a coordination point for FAD. Arg201 contributes to the DNA binding site. 209–213 is an FAD binding site; the sequence is GSRLS. Interaction with DNA stretches follow at residues 244-251 and 310-311; these read ELLWRDFS and NR. 341 to 343 is an FAD binding site; the sequence is DGD. DNA is bound at residue Gln373.

Belongs to the DNA photolyase class-1 family. As to quaternary structure, monomer. Requires FAD as cofactor.

It carries out the reaction cyclobutadipyrimidine (in DNA) = 2 pyrimidine residues (in DNA).. Involved in repair of UV radiation-induced DNA damage. Catalyzes the light-dependent monomerization (300-600 nm) of cyclobutyl pyrimidine dimers (in cis-syn configuration), which are formed between adjacent bases on the same DNA strand upon exposure to ultraviolet radiation. This is Deoxyribodipyrimidine photo-lyase (phr) from Thermus thermophilus (strain ATCC BAA-163 / DSM 7039 / HB27).